The chain runs to 964 residues: Phosphoenolpyruvate carboxylase (964 aa).

Phosphoserine is present on S11. Residues H172 and K600 contribute to the active site.

The protein belongs to the PEPCase type 1 family. In terms of assembly, homotetramer. The cofactor is Mg(2+).

Its subcellular location is the cytoplasm. It carries out the reaction oxaloacetate + phosphate = phosphoenolpyruvate + hydrogencarbonate. The protein operates within photosynthesis; C4 acid pathway. Its activity is regulated as follows. By light-reversible phosphorylation. Its function is as follows. Through the carboxylation of phosphoenolpyruvate (PEP) it forms oxaloacetate, a four-carbon dicarboxylic acid source for the tricarboxylic acid cycle. This chain is Phosphoenolpyruvate carboxylase, found in Amaranthus hypochondriacus (Prince-of-Wales feather).